We begin with the raw amino-acid sequence, 122 residues long: Large ribosomal subunit protein uL14 (122 aa).

This sequence belongs to the universal ribosomal protein uL14 family. In terms of assembly, part of the 50S ribosomal subunit. Forms a cluster with proteins L3 and L19. In the 70S ribosome, L14 and L19 interact and together make contacts with the 16S rRNA in bridges B5 and B8.

In terms of biological role, binds to 23S rRNA. Forms part of two intersubunit bridges in the 70S ribosome. The protein is Large ribosomal subunit protein uL14 of Carboxydothermus hydrogenoformans (strain ATCC BAA-161 / DSM 6008 / Z-2901).